We begin with the raw amino-acid sequence, 203 residues long: Holliday junction branch migration complex subunit RuvA (203 aa).

The tract at residues 1–64 (MIGRLRGIII…EDAQLLYGFN (64 aa)) is domain I. A domain II region spans residues 65-142 (NKQERTLFKE…KGLHGDLFTP (78 aa)). The tract at residues 143 to 154 (AADLVLTSPASP) is flexible linker. The interval 155-203 (ATDDAEQEAVAALVALGYKPQEASRMVSKIARPDASSETLIREALHAAL) is domain III.

This sequence belongs to the RuvA family. Homotetramer. Forms an RuvA(8)-RuvB(12)-Holliday junction (HJ) complex. HJ DNA is sandwiched between 2 RuvA tetramers; dsDNA enters through RuvA and exits via RuvB. An RuvB hexamer assembles on each DNA strand where it exits the tetramer. Each RuvB hexamer is contacted by two RuvA subunits (via domain III) on 2 adjacent RuvB subunits; this complex drives branch migration. In the full resolvosome a probable DNA-RuvA(4)-RuvB(12)-RuvC(2) complex forms which resolves the HJ.

The protein resides in the cytoplasm. Functionally, the RuvA-RuvB-RuvC complex processes Holliday junction (HJ) DNA during genetic recombination and DNA repair, while the RuvA-RuvB complex plays an important role in the rescue of blocked DNA replication forks via replication fork reversal (RFR). RuvA specifically binds to HJ cruciform DNA, conferring on it an open structure. The RuvB hexamer acts as an ATP-dependent pump, pulling dsDNA into and through the RuvAB complex. HJ branch migration allows RuvC to scan DNA until it finds its consensus sequence, where it cleaves and resolves the cruciform DNA. The sequence is that of Holliday junction branch migration complex subunit RuvA from Escherichia fergusonii (strain ATCC 35469 / DSM 13698 / CCUG 18766 / IAM 14443 / JCM 21226 / LMG 7866 / NBRC 102419 / NCTC 12128 / CDC 0568-73).